The chain runs to 514 residues: Endoglucanase MaCel5A (514 aa).

The N-terminal stretch at methionine 1–alanine 23 is a signal peptide. Low complexity-rich tracts occupy residues glycine 91–glycine 114 and serine 179–glycine 201. Disordered regions lie at residues glycine 91–glycine 118 and serine 179–serine 208. Residue glutamate 346 is the Proton donor of the active site. Glutamate 439 serves as the catalytic Nucleophile.

This sequence belongs to the glycosyl hydrolase 5 (cellulase A) family.

The catalysed reaction is Endohydrolysis of (1-&gt;4)-beta-D-glucosidic linkages in cellulose, lichenin and cereal beta-D-glucans.. Exhibits strong halostability and halotolerance. The activity increases about tenfold in the presence of 0.5 M NaCl, and about fivefold in the presence of 4.0 M NaCl. Tolerates detergents, but activity is decreased in the presence of EDTA. Activity is enhanced in the presence of Mn(2+), Ca(2+), Ba(2+) or Mg(2+), and decreased in the presence of Zn(2+), Cu(2+), Al(3+) or Fe(3+). Endoglucanase that exhibits highest activity toward barley beta-glucan, lower activity toward carboxymethyl cellulose (CMC-Na), and marginal activity toward laminarin and xylan. This is Endoglucanase MaCel5A from Microbulbifer sp. (strain ALW1).